The chain runs to 134 residues: Small ribosomal subunit protein uS9 (134 aa).

Positions 113-134 (REVERKKYGLKKARRAPQFSKR) are disordered. A compositionally biased stretch (basic residues) spans 120–134 (YGLKKARRAPQFSKR).

This sequence belongs to the universal ribosomal protein uS9 family.

The protein is Small ribosomal subunit protein uS9 (rpsI) of Thermotoga maritima (strain ATCC 43589 / DSM 3109 / JCM 10099 / NBRC 100826 / MSB8).